Consider the following 407-residue polypeptide: Argininosuccinate synthase (407 aa).

ATP is bound by residues 11–19 (AYSGGLDTS) and Ala38. L-citrulline-binding residues include Tyr91 and Ser96. Gly121 is a binding site for ATP. Residues Thr123, Asn127, and Asp128 each coordinate L-aspartate. L-citrulline is bound at residue Asn127. Residues Arg131, Ser181, Ser190, Glu266, and Tyr278 each contribute to the L-citrulline site.

It belongs to the argininosuccinate synthase family. Type 1 subfamily. In terms of assembly, homotetramer.

It localises to the cytoplasm. It carries out the reaction L-citrulline + L-aspartate + ATP = 2-(N(omega)-L-arginino)succinate + AMP + diphosphate + H(+). Its pathway is amino-acid biosynthesis; L-arginine biosynthesis; L-arginine from L-ornithine and carbamoyl phosphate: step 2/3. The chain is Argininosuccinate synthase from Campylobacter concisus (strain 13826).